We begin with the raw amino-acid sequence, 245 residues long: MSALFISDLHLCEQRPVTLRAFFAFLQGPARSVQALYILGDLFEYWAGDDDATPLDNAVSDALAALAETGTSLFFLPGNRDFLLGESFARRARLRILPDPTLIDFDNEGVLLSHGDILCTDDEHYQSFRRLVRDPAWQLAFLERPLAQRKQVIEGLRFQSETAKQEKASDIMDVNAFAVETLLREHGYPTLIHGHTHRPAHHVHVVDGRSCERWVLADWHDDAPYLRWDGAGPPVALRFGAKLGT.

Mn(2+)-binding residues include Asp-8, His-10, Asp-41, Asn-79, and His-114. Position 79–80 (79–80 (NR)) interacts with substrate. Residues Asp-122, Ser-160, Lys-164, Lys-167, and His-195 each contribute to the substrate site. 2 residues coordinate Mn(2+): His-195 and His-197.

Belongs to the LpxH family. It depends on Mn(2+) as a cofactor.

The protein resides in the cell inner membrane. The enzyme catalyses UDP-2-N,3-O-bis[(3R)-3-hydroxytetradecanoyl]-alpha-D-glucosamine + H2O = 2-N,3-O-bis[(3R)-3-hydroxytetradecanoyl]-alpha-D-glucosaminyl 1-phosphate + UMP + 2 H(+). It participates in glycolipid biosynthesis; lipid IV(A) biosynthesis; lipid IV(A) from (3R)-3-hydroxytetradecanoyl-[acyl-carrier-protein] and UDP-N-acetyl-alpha-D-glucosamine: step 4/6. Functionally, hydrolyzes the pyrophosphate bond of UDP-2,3-diacylglucosamine to yield 2,3-diacylglucosamine 1-phosphate (lipid X) and UMP by catalyzing the attack of water at the alpha-P atom. Involved in the biosynthesis of lipid A, a phosphorylated glycolipid that anchors the lipopolysaccharide to the outer membrane of the cell. The protein is UDP-2,3-diacylglucosamine hydrolase of Aromatoleum aromaticum (strain DSM 19018 / LMG 30748 / EbN1) (Azoarcus sp. (strain EbN1)).